The sequence spans 376 residues: TelA-like protein SERP0976 (376 aa).

Belongs to the TelA family.

This is TelA-like protein SERP0976 from Staphylococcus epidermidis (strain ATCC 35984 / DSM 28319 / BCRC 17069 / CCUG 31568 / BM 3577 / RP62A).